We begin with the raw amino-acid sequence, 340 residues long: Nuclear hormone receptor family member nhr-268 (340 aa).

Residues 1–75 constitute a DNA-binding region (nuclear receptor); it reads MNCLVCSARA…IGMKAASKND (75 aa). 2 consecutive NR C4-type zinc fingers follow at residues 3-23 and 39-58; these read CLVC…CFAC and CKYF…CRAC. Residues 98–337 form the NR LBD domain; it reads KNDKNYSNFI…KRLMQDIFSH (240 aa).

Belongs to the nuclear hormone receptor family.

It is found in the nucleus. Functionally, orphan nuclear receptor. This chain is Nuclear hormone receptor family member nhr-268 (nhr-268), found in Caenorhabditis elegans.